The primary structure comprises 101 residues: Ferredoxin Fdx2 (101 aa).

2 4Fe-4S ferredoxin-type domains span residues 1–29 (MATY…EGDE) and 31–64 (YVID…PNPQ). [4Fe-4S] cluster-binding residues include C9, C12, C15, C19, C38, C41, C50, and C54.

Requires [4Fe-4S] cluster as cofactor.

Functionally, ferredoxins are iron-sulfur proteins that transfer electrons in a wide variety of metabolic reactions. Fdx2 can receive electrons from both FdR_A and FdR_B ferredoxin reductases, with a preference for FdR_B compared with FdR_A, and transfer the electrons to the cytochrome P450 CYP260A1. This Sorangium cellulosum (strain So ce56) (Polyangium cellulosum (strain So ce56)) protein is Ferredoxin Fdx2.